Reading from the N-terminus, the 185-residue chain is Dehydrin ERD14 (185 aa).

4 stretches are compositionally biased toward basic and acidic residues: residues 1 to 13 (MAEE…EQEV), 25 to 45 (VTDR…KPEE), 52 to 78 (FEQK…HRSD), and 103 to 134 (KPTT…KPED). Disordered regions lie at residues 1–138 (MAEE…GSAV) and 166–185 (EKLP…KDKE). Ala-2 is modified (N-acetylalanine). Ser-59 carries the phosphoserine modification. Repeat copies occupy residues 112-132 (EEEK…HKKP) and 154-174 (PVEK…YHPK). A 2 X 21 AA repeats, Lys-rich region spans residues 112-174 (EEEKKGFMEK…KEKLPGYHPK (63 aa)).

Belongs to the plant dehydrin family. As to expression, in stems, cauline leaves, roots and flowers. Low levels found in maturing seeds. Absent in dry seeds.

Its function is as follows. Intrinsically disordered protein acting as a chaperone. Prevents heat-induced aggregation and/or inactivation of various substrates. Binds to acidic phospholipid vesicles without affecting membrane fluidity. The sequence is that of Dehydrin ERD14 (ERD14) from Arabidopsis thaliana (Mouse-ear cress).